A 291-amino-acid chain; its full sequence is Small ribosomal subunit biogenesis GTPase RsgA 2 (291 aa).

One can recognise a CP-type G domain in the interval Glu63–Ile221. GTP is bound by residues Ser112 to Asp115 and Gly164 to Thr172. Cys245, Cys250, His252, and Cys258 together coordinate Zn(2+).

This sequence belongs to the TRAFAC class YlqF/YawG GTPase family. RsgA subfamily. Monomer. Associates with 30S ribosomal subunit, binds 16S rRNA. It depends on Zn(2+) as a cofactor.

It localises to the cytoplasm. In terms of biological role, one of several proteins that assist in the late maturation steps of the functional core of the 30S ribosomal subunit. Helps release RbfA from mature subunits. May play a role in the assembly of ribosomal proteins into the subunit. Circularly permuted GTPase that catalyzes slow GTP hydrolysis, GTPase activity is stimulated by the 30S ribosomal subunit. The sequence is that of Small ribosomal subunit biogenesis GTPase RsgA 2 from Listeria monocytogenes serovar 1/2a (strain ATCC BAA-679 / EGD-e).